Consider the following 510-residue polypeptide: MKSKLICIIMVIAFQAHFTMTVKADSVGEEKLQNNTQAKKTPADLKALPDSCEAKDFYKNFKILDMTKDKLGVTHYTLALSSGGYLTDNDEIKVHVTPDNKITFINGDLQQGQLRITNQIKITEKNAIEKAFEAIGQSEAHVKSYVGNPVKEKEIILNSRTKRLVYNIKLIFAEPEVASWIVQVDVETGAILKKQNMLSEVERADTHKDFQALGKGANRLLQRPLHVMKINDLFYLVDRTHKGLIRTFDLKHNTDTSFGKVVSNKTNMFTDPEFSSAVDAHFYASEVYEYYKNVHQLESLDGKGGEIDSFVHYGLNCNNAFWDGQEILYGDGDKKNFKPFSCAKTIVGHELTHAVIQYSAGLEYEGQSGALNESFADVFGYFIAPNHWLIGEDVCVRGSRDGRIRSIKDPDKYNQAAHMKDYESLPLTEEGDWGGVHYNSGIPNKAAYNTITKLGKEKTEQLYFRALKYYLTKKSQFTDAKKALQQAAKDLYGEDASKKVAEAWEAVGVN.

The N-terminal stretch at 1–24 (MKSKLICIIMVIAFQAHFTMTVKA) is a signal peptide. Positions 25-200 (DSVGEEKLQN…ILKKQNMLSE (176 aa)) are excised as a propeptide. His349 contacts Zn(2+). Glu350 is a catalytic residue. 2 residues coordinate Zn(2+): His353 and Glu373. The Proton donor role is filled by His437.

It belongs to the peptidase M4 family. The cofactor is Zn(2+).

It localises to the secreted. Its function is as follows. Probably linked to the pathogenesis of listerial infection. The polypeptide is Zinc metalloproteinase (mpl) (Listeria monocytogenes serovar 1/2a (strain ATCC BAA-679 / EGD-e)).